The following is a 254-amino-acid chain: Imidazole glycerol phosphate synthase subunit HisF (254 aa).

Residues Asp-12 and Asp-131 contribute to the active site.

Belongs to the HisA/HisF family. Heterodimer of HisH and HisF.

It is found in the cytoplasm. It catalyses the reaction 5-[(5-phospho-1-deoxy-D-ribulos-1-ylimino)methylamino]-1-(5-phospho-beta-D-ribosyl)imidazole-4-carboxamide + L-glutamine = D-erythro-1-(imidazol-4-yl)glycerol 3-phosphate + 5-amino-1-(5-phospho-beta-D-ribosyl)imidazole-4-carboxamide + L-glutamate + H(+). It functions in the pathway amino-acid biosynthesis; L-histidine biosynthesis; L-histidine from 5-phospho-alpha-D-ribose 1-diphosphate: step 5/9. Its function is as follows. IGPS catalyzes the conversion of PRFAR and glutamine to IGP, AICAR and glutamate. The HisF subunit catalyzes the cyclization activity that produces IGP and AICAR from PRFAR using the ammonia provided by the HisH subunit. The polypeptide is Imidazole glycerol phosphate synthase subunit HisF (Desulfitobacterium hafniense (strain Y51)).